A 272-amino-acid polypeptide reads, in one-letter code: MDMKRRIHLELRNRTPAAVQELVLDNCKANDGKIEGLTDEFVNLEFLSLINVGLFSVSDLPKLPKLKKLELSENRIFGGLDRLAEELPSLTHLNLSGNNLKDISTLEPLKRLDCLKSLDLFGCEVTNRSDYRETVFRLLPQLSYLDGYDREDQEAPDSDVEVDSVEEAPDSDGEVDGVDKEEEDEEGEDEEEEEDEDGEEEEDEDEEDEDEDEDVEGEDDEDEVSGEEEEFGHDGEVDEDEEDEDEDEDEEEEESGKGEKRKRETDDEGEDD.

LRR repeat units follow at residues 16–40, 43–64, 65–84, and 89–110; these read PAAV…LTDE, NLEF…PKLP, KLKK…DRLA, and SLTH…EPLK. The LRRCT domain occupies 123-161; it reads CEVTNRSDYRETVFRLLPQLSYLDGYDREDQEAPDSDVE. A compositionally biased stretch (acidic residues) spans 149–254; that stretch reads DREDQEAPDS…DEDEDEEEEE (106 aa). Residues 149–272 form a disordered region; the sequence is DREDQEAPDS…RETDDEGEDD (124 aa). Phosphoserine occurs at positions 164 and 171. Residues 255–265 show a composition bias toward basic and acidic residues; it reads SGKGEKRKRET. A Nuclear localization signal motif is present at residues 260-263; sequence KRKR. Residue threonine 265 is modified to Phosphothreonine.

It belongs to the ANP32 family. Interacts with histones H3 and H4. Interacts with KLF5; this interaction induces promoter region-specific histone incorporation and inhibition of histone acetylation by ANP32B. In terms of processing, some glutamate residues are glycylated by TTLL8. This modification occurs exclusively on glutamate residues and results in a glycine chain on the gamma-carboxyl group. Post-translationally, directly cleaved by caspase-3/CASP3. In terms of tissue distribution, predominantly expressed in brain. Expressed in the entire embryonic brain, whereas in the adult brain its expression is restricted to the subventricular zone where there are neural progenitor cells.

Its subcellular location is the nucleus. Its function is as follows. Multifunctional protein that is involved in the regulation of many processes including cell proliferation, apoptosis, cell cycle progression or transcription. Regulates the proliferation of neuronal stem cells, differentiation of leukemic cells and progression from G1 to S phase of the cell cycle. As negative regulator of caspase-3-dependent apoptosis, may act as an antagonist of ANP32A in regulating tissue homeostasis. Exhibits histone chaperone properties, able to recruit histones to certain promoters, thus regulating the transcription of specific genes. Also plays an essential role in the nucleocytoplasmic transport of specific mRNAs via the uncommon nuclear mRNA export receptor XPO1/CRM1. Participates in the regulation of adequate adaptive immune responses by acting on mRNA expression and cell proliferation. In Rattus norvegicus (Rat), this protein is Acidic leucine-rich nuclear phosphoprotein 32 family member B (Anp32b).